The sequence spans 208 residues: Heart- and neural crest derivatives-expressed protein 2 (208 aa).

2 disordered regions span residues 79 to 106 (AGAV…TQSI) and 161 to 197 (EFKK…RTGW). A compositionally biased stretch (basic residues) spans 88-103 (TVKRRPTANRKERRRT). Residues 90–142 (KRRPTANRKERRRTQSINSAFAELRECIPNVPADTKLSKIKTLRLATSYIAYL) enclose the bHLH domain. Positions 161–178 (EFKKTDAKEERRKKEMND) are enriched in basic and acidic residues.

Efficient DNA binding requires dimerization with another bHLH protein.

The protein localises to the nucleus. Essential for myocardial and pectoral fin differentiation, patterning and morphogenesis. This chain is Heart- and neural crest derivatives-expressed protein 2 (hand2), found in Danio rerio (Zebrafish).